Consider the following 911-residue polypeptide: Protein dead ringer (911 aa).

Disordered stretches follow at residues methionine 1 to serine 44, serine 67 to histidine 87, and histidine 172 to glycine 274. A compositionally biased stretch (basic and acidic residues) spans isoleucine 19–arginine 34. Serine 30 carries the post-translational modification Phosphoserine. Position 35 is a phosphothreonine (threonine 35). Serine 44 is modified (phosphoserine). Low complexity predominate over residues threonine 174 to threonine 201. The segment covering asparagine 202–glycine 231 has biased composition (gly residues). The span at alanine 252–asparagine 273 shows a compositional bias: low complexity. The region spanning aspartate 293 to lysine 385 is the ARID domain. 3 disordered regions span residues glycine 501–glycine 633, proline 662–asparagine 775, and glutamine 826–methionine 877. The span at histidine 512 to serine 550 shows a compositional bias: low complexity. A compositionally biased stretch (polar residues) spans histidine 570 to asparagine 600. Phosphoserine occurs at positions 592 and 594. The span at isoleucine 601 to valine 621 shows a compositional bias: basic and acidic residues. The residue at position 720 (serine 720) is a Phosphoserine. The region spanning threonine 731–serine 825 is the REKLES domain. A compositionally biased stretch (basic residues) spans glycine 737–glycine 751. The segment covering threonine 841 to glutamate 853 has biased composition (acidic residues). Basic and acidic residues predominate over residues proline 854–asparagine 870.

As to expression, present in the pharyngeal muscles, hindgut epithelium, amnioserosa, ring gland, midgut-hindgut junction, posterior region of each brain lobe, longitudinal glial cells of the CNS and the salivary gland duct of germ-band retracted embryos.

It localises to the nucleus. Transcription factor which is a downstream target of gcm and repo. Directly or indirectly activates the transcription of locos and pros, which are essential for the development of some glial cells. Plays an essential role in defining the cell shape and migration characteristics of longitudinal glia that enable them to establish a normal axon scaffold. The chain is Protein dead ringer (retn) from Drosophila melanogaster (Fruit fly).